A 147-amino-acid polypeptide reads, in one-letter code: DNA polymerase III subunit chi (147 aa).

This sequence belongs to the DNA polymerase III chi/HolC chain family. In terms of assembly, the DNA polymerase III holoenzyme complex contains at least 10 different subunits organized into 3 functionally essential subassemblies: the Pol III core, the beta sliding clamp processivity factor and the clamp-loading complex. The Pol III core (subunits alpha, epsilon and theta) contains the polymerase and the 3'-5' exonuclease proofreading activities. The polymerase is tethered to the template via the dimeric beta sliding clamp processivity factor. The clamp-loading complex (also called gamma complex) assembles the beta sliding clamp onto the primed template and plays a central role in the organization and communication at the replication fork. The clamp-loading complex contains delta, delta', psi and chi, and 3 copies of either or both of two different DnaX proteins, gamma and tau. The DNA replisome complex has a single clamp loader (3 tau and 1 each of delta, delta', psi and chi subunits) which binds 3 Pol III cores (1 core on the leading strand and 2 on the lagging strand) each with a beta sliding clamp dimer. Additional proteins in the replisome are other copies of gamma, psi (holD) and chi (this protein), SSB, DNA helicase and RNA primase. The clamp loader hydrolyzes ATP to assemble the beta processivity factor onto the primed template and plays a central role in the organization and communication at the replication fork. The only subunit of the DNA polymerase III holoenzyme known to interact with single-stranded DNA binding protein (SSB). Interacts directly with the psi subunit (holD). Interacts directly with DNA helicase YoaA. It binds to HolD and YoaA, but not both simultaneously.

The enzyme catalyses DNA(n) + a 2'-deoxyribonucleoside 5'-triphosphate = DNA(n+1) + diphosphate. In terms of biological role, part of the beta sliding clamp loading complex, which hydrolyzes ATP to load the beta clamp onto primed DNA to form the DNA replication pre-initiation complex. DNA polymerase III is a complex, multichain enzyme responsible for most of the replicative synthesis in bacteria. This DNA polymerase also exhibits 3' to 5' exonuclease activity. Genetically identified as involved in the repair of replication forks and tolerance of the chain-terminating nucleoside analog 3' AZT. This subunit may stabilize YoaA and/or stimulate the helicase activity of YoaA. This chain is DNA polymerase III subunit chi, found in Escherichia coli (strain K12).